Here is a 394-residue protein sequence, read N- to C-terminus: Large ribosomal subunit protein mL44 (394 aa).

The N-terminal 21 residues, 1–21 (MFRHVAQNLGSRNTSIQSYRL), are a transit peptide targeting the mitochondrion.

This sequence belongs to the ribonuclease III family. Mitochondrion-specific ribosomal protein mL44 subfamily. Component of the mitochondrial large ribosomal subunit (mt-LSU).

Its subcellular location is the mitochondrion. Its function is as follows. Component of the mitochondrial ribosome. May have a function in the assembly/stability of nascent mitochondrial polypeptides exiting the ribosome. The protein is Large ribosomal subunit protein mL44 of Caenorhabditis elegans.